Here is a 523-residue protein sequence, read N- to C-terminus: Ribonuclease Y (523 aa).

The helical transmembrane segment at 3 to 23 (VWYAIGSIIFGLLVGVSVYLI) threads the bilayer. The KH domain occupies 213 to 279 (LVNVINLPND…TKTIEKLVED (67 aa)). The 94-residue stretch at 339 to 432 (ALGHSIEVAN…VCAADTLSAA (94 aa)) folds into the HD domain.

The protein belongs to the RNase Y family.

It is found in the cell membrane. Endoribonuclease that initiates mRNA decay. The chain is Ribonuclease Y from Helicobacter hepaticus (strain ATCC 51449 / 3B1).